The primary structure comprises 185 residues: Monothiol glutaredoxin-S4, mitochondrial (185 aa).

The transit peptide at 1–36 (MARLMSSALIRGLVRSSCSPTVAAVAQPTIHQFRNY) directs the protein to the mitochondrion. A disordered region spans residues 37-74 (SSGLGGDSTATGDSSSTRVAADPDTHQDFQPTTKSSNM). Residues 43-53 (DSTATGDSSST) are compositionally biased toward low complexity. Positions 64–74 (DFQPTTKSSNM) are enriched in polar residues. A Glutaredoxin domain is found at 77-179 (DDIVSQDIKE…DVLGDIAQKR (103 aa)). Residue lysine 94 coordinates glutathione. Cysteine 102 is a binding site for [2Fe-2S] cluster. Residues lysine 131, phenylalanine 143, and 156–157 (SD) contribute to the glutathione site.

It belongs to the glutaredoxin family. CGFS subfamily.

Its subcellular location is the mitochondrion. Functionally, may only reduce GSH-thiol disulfides, but not protein disulfides. The sequence is that of Monothiol glutaredoxin-S4, mitochondrial (GRXS4) from Oryza sativa subsp. japonica (Rice).